Reading from the N-terminus, the 357-residue chain is Alanine racemase (357 aa).

Lys33 (proton acceptor; specific for D-alanine) is an active-site residue. An N6-(pyridoxal phosphate)lysine modification is found at Lys33. A substrate-binding site is contributed by Arg129. The Proton acceptor; specific for L-alanine role is filled by Tyr253. Met301 contacts substrate.

This sequence belongs to the alanine racemase family. Pyridoxal 5'-phosphate serves as cofactor.

The catalysed reaction is L-alanine = D-alanine. It functions in the pathway amino-acid biosynthesis; D-alanine biosynthesis; D-alanine from L-alanine: step 1/1. Its function is as follows. Catalyzes the interconversion of L-alanine and D-alanine. May also act on other amino acids. The sequence is that of Alanine racemase (alr) from Pseudomonas entomophila (strain L48).